The sequence spans 359 residues: Glycerol-3-phosphate dehydrogenase [NAD(P)+] (359 aa).

Positions 11, 12, 32, and 107 each coordinate NADPH. Lysine 107 and glycine 138 together coordinate sn-glycerol 3-phosphate. Alanine 142 is a binding site for NADPH. Residues lysine 193, aspartate 246, serine 256, arginine 257, and asparagine 258 each contribute to the sn-glycerol 3-phosphate site. Lysine 193 (proton acceptor) is an active-site residue. Arginine 257 lines the NADPH pocket. Valine 281 and glutamate 283 together coordinate NADPH.

It belongs to the NAD-dependent glycerol-3-phosphate dehydrogenase family.

The protein resides in the cytoplasm. The catalysed reaction is sn-glycerol 3-phosphate + NAD(+) = dihydroxyacetone phosphate + NADH + H(+). It catalyses the reaction sn-glycerol 3-phosphate + NADP(+) = dihydroxyacetone phosphate + NADPH + H(+). It functions in the pathway membrane lipid metabolism; glycerophospholipid metabolism. Functionally, catalyzes the reduction of the glycolytic intermediate dihydroxyacetone phosphate (DHAP) to sn-glycerol 3-phosphate (G3P), the key precursor for phospholipid synthesis. The chain is Glycerol-3-phosphate dehydrogenase [NAD(P)+] from Dehalococcoides mccartyi (strain ATCC BAA-2100 / JCM 16839 / KCTC 5957 / BAV1).